A 331-amino-acid chain; its full sequence is Putative serine/threonine-protein kinase ZK507.1 (331 aa).

One can recognise a Protein kinase domain in the interval methionine 1–valine 270. Aspartate 116 (proton acceptor) is an active-site residue. Residues serine 302–lysine 314 are compositionally biased toward basic and acidic residues. Positions serine 302–tyrosine 331 are disordered.

It belongs to the protein kinase superfamily. Ser/Thr protein kinase family.

The enzyme catalyses L-seryl-[protein] + ATP = O-phospho-L-seryl-[protein] + ADP + H(+). It catalyses the reaction L-threonyl-[protein] + ATP = O-phospho-L-threonyl-[protein] + ADP + H(+). This is Putative serine/threonine-protein kinase ZK507.1 from Caenorhabditis elegans.